Consider the following 124-residue polypeptide: Small ribosomal subunit protein uS10 (124 aa).

Belongs to the universal ribosomal protein uS10 family.

This chain is Small ribosomal subunit protein uS10 (rps20), found in Dictyostelium discoideum (Social amoeba).